The primary structure comprises 375 residues: Tyrosine--tRNA ligase (375 aa).

L-tyrosine-binding residues include Tyr-37, Tyr-168, Gln-172, Asp-175, and Gln-190. A 'KMSKS' region motif is present at residues 251-255; it reads KMSKS. An ATP-binding site is contributed by Lys-254.

The protein belongs to the class-I aminoacyl-tRNA synthetase family. TyrS type 4 subfamily. In terms of assembly, homodimer.

It is found in the cytoplasm. It carries out the reaction tRNA(Tyr) + L-tyrosine + ATP = L-tyrosyl-tRNA(Tyr) + AMP + diphosphate + H(+). Functionally, catalyzes the attachment of tyrosine to tRNA(Tyr) in a two-step reaction: tyrosine is first activated by ATP to form Tyr-AMP and then transferred to the acceptor end of tRNA(Tyr). The protein is Tyrosine--tRNA ligase of Thermococcus gammatolerans (strain DSM 15229 / JCM 11827 / EJ3).